A 289-amino-acid polypeptide reads, in one-letter code: Ferri-bacillibactin esterase BesA (289 aa).

Residues serine 163, glutamate 225, and histidine 263 each act as charge relay system in the active site.

The protein belongs to the esterase D family.

It is found in the cytoplasm. In terms of biological role, catalyzes the hydrolysis of the trilactone cycle of ferri-bacillibactin (ferri-BB) complex, leading to the formation of bacillibactin monomers and to cytosolic iron release, thus making iron available for metabolic use. Can also hydrolyze bacillibactin (BB), however the catalytic efficiency for ferri-BB hydrolysis is much higher than for BB. The polypeptide is Ferri-bacillibactin esterase BesA (besA) (Bacillus subtilis (strain 168)).